The primary structure comprises 375 residues: Adiponectin receptor protein 1 (375 aa).

Positions 1–60 are disordered; it reads MSSHKGSAGAQGNGAPSGNREADTVELAELGPLLEEKGKRAASSPAKAEEDQACPVPQEE. The Cytoplasmic segment spans residues 1-136; the sequence is MSSHKGSAGA…SIFRIHTETG (136 aa). A helical transmembrane segment spans residues 137–157; it reads NIWTHLLGFVLFLFLGILTML. Topologically, residues 158 to 170 are extracellular; that stretch reads RPNMYFMAPLQEK. A helical membrane pass occupies residues 171–191; the sequence is VVFGMFFLGAVLCLSFSWLFH. Residue H191 participates in Zn(2+) binding. The Cytoplasmic portion of the chain corresponds to 192–203; it reads TVYCHSEKVSRT. Residues 204–224 form a helical membrane-spanning segment; the sequence is FSKLDYSGIALLIMGSFVPWL. Over 225-234 the chain is Extracellular; that stretch reads YYSFYCSPQP. Residues 235-255 traverse the membrane as a helical segment; it reads RLIYLSIVCVLGISAIIVAQW. Topologically, residues 256–264 are cytoplasmic; it reads DRFATPKHR. The helical transmembrane segment at 265–285 threads the bilayer; sequence QTRAGVFLGLGLSGVVPTMHF. Residues 286-298 lie on the Extracellular side of the membrane; the sequence is TIAEGFVKATTVG. A helical membrane pass occupies residues 299–319; the sequence is QMGWFFLMAVMYITGAGLYAA. The Cytoplasmic portion of the chain corresponds to 320 to 337; that stretch reads RIPERFFPGKFDIWFQSH. Zn(2+) contacts are provided by H337 and H341. A helical membrane pass occupies residues 338–358; it reads QIFHVLVVAAAFVHFYGVSNL. The Extracellular portion of the chain corresponds to 359–375; it reads QEFRYGLEGGCTDDSLL.

Belongs to the ADIPOR family. May form homooligomers and heterooligomers with ADIPOR2. Interacts with APPL2 (via BAR domain); hinders the accessibility of APPL1 to ADIPOR1; negatively regulates adiponectin signaling; ADIPOQ dissociates this interaction and facilitates the recruitment of APPL1 to ADIPOR1. Interacts with APPL1; ADIPOQ enhances this interaction; inhibites adiponectin-stimulated binding of APPL2 to ADIPOR1. In terms of tissue distribution, detected in brain and quadriceps muscle (at protein level). Widely expressed. Expressed in heart, kidney, liver, lung, skeletal muscle, white adipose tissue, brown adipose tissue, aorta and spleen. Weakly expressed in brain and testis.

It is found in the cell membrane. Functionally, receptor for ADIPOQ, an essential hormone secreted by adipocytes that regulates glucose and lipid metabolism. Required for normal glucose and fat homeostasis and for maintaining a normal body weight. ADIPOQ-binding activates a signaling cascade that leads to increased AMPK activity, and ultimately to increased fatty acid oxidation, increased glucose uptake and decreased gluconeogenesis. Has high affinity for globular adiponectin and low affinity for full-length adiponectin. In Mus musculus (Mouse), this protein is Adiponectin receptor protein 1.